The chain runs to 146 residues: ATP synthase epsilon chain (146 aa).

It belongs to the ATPase epsilon chain family. F-type ATPases have 2 components, CF(1) - the catalytic core - and CF(0) - the membrane proton channel. CF(1) has five subunits: alpha(3), beta(3), gamma(1), delta(1), epsilon(1). CF(0) has three main subunits: a, b and c.

The protein localises to the cell membrane. Its function is as follows. Produces ATP from ADP in the presence of a proton gradient across the membrane. The sequence is that of ATP synthase epsilon chain from Lactobacillus helveticus (strain DPC 4571).